The following is a 55-amino-acid chain: MAKPTTIKIRLNSSAGTGHFYVTKKNARTMTEKMVIKKYDPVARKHVEYKEGKIK.

The protein belongs to the bacterial ribosomal protein bL33 family.

The protein is Large ribosomal subunit protein bL33 of Roseobacter denitrificans (strain ATCC 33942 / OCh 114) (Erythrobacter sp. (strain OCh 114)).